The primary structure comprises 1325 residues: uncharacterized protein (1325 aa).

An N-terminal signal peptide occupies residues Met-1–Ala-18. Cys-19 carries the N-palmitoyl cysteine lipid modification. The S-diacylglycerol cysteine moiety is linked to residue Cys-19.

The protein to E.coli YfaL.

The protein localises to the cell membrane. This is an uncharacterized protein from Escherichia coli (strain K12).